A 152-amino-acid polypeptide reads, in one-letter code: CASP-like protein 5C1 (152 aa).

The Cytoplasmic segment spans residues 1-12 (MVRTTASFGTSS). The chain crosses the membrane as a helical span at residues 13–33 (SFVLRLGQTLFSSASLLFMCF). At 34-44 (NDDEDFYAYTT) the chain is on the extracellular side. A helical transmembrane segment spans residues 45–65 (FCYLVTVMGLVTPWSVTLALM). Over 66–80 (EAYSILVKKLPMQAT) the chain is Cytoplasmic. Residues 81-101 (VISVIVAGDFVLSFLSLGGAC) form a helical membrane-spanning segment. The Extracellular segment spans residues 102 to 126 (STASVAVLLMDAGEKQCDRYKLSAT). The helical transmembrane segment at 127-147 (MAFLSSFLSFASTFFNFCLLP) threads the bilayer. Residues 148–152 (SLMSH) are Cytoplasmic-facing.

Belongs to the Casparian strip membrane proteins (CASP) family. As to quaternary structure, homodimer and heterodimers.

It localises to the cell membrane. This Arabidopsis thaliana (Mouse-ear cress) protein is CASP-like protein 5C1.